We begin with the raw amino-acid sequence, 346 residues long: Ketol-acid reductoisomerase (NADP(+)) (346 aa).

The KARI N-terminal Rossmann domain occupies 1-189 (MQVYYDRDAD…GGGRSGIIET (189 aa)). Residues 24 to 27 (YGSQ), Arg48, Ser51, Thr53, and 83 to 86 (DEHQ) each bind NADP(+). The active site involves His108. Gly134 contributes to the NADP(+) binding site. The 146-residue stretch at 190–335 (TFKEECETDL…EKLRAMMPWI (146 aa)) folds into the KARI C-terminal knotted domain. Mg(2+) is bound by residues Asp198, Glu202, Glu234, and Glu238. Substrate is bound at residue Ser259.

The protein belongs to the ketol-acid reductoisomerase family. Mg(2+) is required as a cofactor.

It catalyses the reaction (2R)-2,3-dihydroxy-3-methylbutanoate + NADP(+) = (2S)-2-acetolactate + NADPH + H(+). The catalysed reaction is (2R,3R)-2,3-dihydroxy-3-methylpentanoate + NADP(+) = (S)-2-ethyl-2-hydroxy-3-oxobutanoate + NADPH + H(+). It participates in amino-acid biosynthesis; L-isoleucine biosynthesis; L-isoleucine from 2-oxobutanoate: step 2/4. The protein operates within amino-acid biosynthesis; L-valine biosynthesis; L-valine from pyruvate: step 2/4. In terms of biological role, involved in the biosynthesis of branched-chain amino acids (BCAA). Catalyzes an alkyl-migration followed by a ketol-acid reduction of (S)-2-acetolactate (S2AL) to yield (R)-2,3-dihydroxy-isovalerate. In the isomerase reaction, S2AL is rearranged via a Mg-dependent methyl migration to produce 3-hydroxy-3-methyl-2-ketobutyrate (HMKB). In the reductase reaction, this 2-ketoacid undergoes a metal-dependent reduction by NADPH to yield (R)-2,3-dihydroxy-isovalerate. The sequence is that of Ketol-acid reductoisomerase (NADP(+)) from Sphingopyxis alaskensis (strain DSM 13593 / LMG 18877 / RB2256) (Sphingomonas alaskensis).